Here is a 30-residue protein sequence, read N- to C-terminus: Cyclotide cter-F (30 aa).

A cross-link (cyclopeptide (Gly-Asp)) is located at residues 1–30 (GIPCGESCVFIPCISSVVGCSCKSKVCYLD). 3 cysteine pairs are disulfide-bonded: Cys-4-Cys-20, Cys-8-Cys-22, and Cys-13-Cys-27.

In terms of processing, contains 3 disulfide bonds. This is a cyclic peptide.

Functionally, probably participates in a plant defense mechanism. The sequence is that of Cyclotide cter-F from Clitoria ternatea (Butterfly pea).